A 274-amino-acid polypeptide reads, in one-letter code: MKKKLKLTSLLGLSLLIMTACATNGVTSDITAESADFWSKLVYFFAEIIRFLSFDISIGVGIILFTVLIRTVLLPVFQVQMVASRKMQEAQPRIKALREQYPGRDMESRTKLEQEMRKVFKEMGVRQSDSLWPILIQMPVILALFQALSRVDFLKTGHFLWINLGSVDTTLVLPILAAVFTFLSTWLSNKALSERNGATTAMMYGIPVLIFIFAVYAPGGVALYWTVSNAYQVLQTYFLNNPFKIIAEREAVVQAQKDLENRKRKAKKKAQKTK.

A signal peptide spans methionine 1–alanine 20. Residue cysteine 21 is the site of N-palmitoyl cysteine attachment. Cysteine 21 carries the S-diacylglycerol cysteine lipid modification. Helical transmembrane passes span isoleucine 56–valine 76, serine 128–leucine 148, valine 167–leucine 187, and glycine 205–tryptophan 225.

Belongs to the OXA1/ALB3/YidC family. Type 2 subfamily.

It is found in the cell membrane. Required for the insertion and/or proper folding and/or complex formation of integral membrane proteins into the membrane. Involved in integration of membrane proteins that insert both dependently and independently of the Sec translocase complex, as well as at least some lipoproteins. This is Membrane protein insertase YidC 2 from Streptococcus pneumoniae serotype 4 (strain ATCC BAA-334 / TIGR4).